Consider the following 301-residue polypeptide: Transposase InsD for insertion element IS2D (301 aa).

An Integrase catalytic domain is found at 106–289; the sequence is KPAVPPSKRA…SPREYLRQRA (184 aa).

Involved in the transposition of the insertion sequence IS2. This is Transposase InsD for insertion element IS2D (insD2) from Escherichia coli (strain K12).